A 551-amino-acid polypeptide reads, in one-letter code: Chloride channel CLIC-like protein 1 (551 aa).

The N-terminal stretch at 1 to 18 (MLCSLLLCECLLLVAGYA) is a signal peptide. The Lumenal portion of the chain corresponds to 19-184 (HDDDWIDPTD…EDSFGVDPYN (166 aa)). A helical transmembrane segment spans residues 185 to 205 (VLMVLLCLLCIVVLVATELWT). The Cytoplasmic segment spans residues 206–216 (YVRWYTQLRRV). The chain crosses the membrane as a helical span at residues 217–237 (LIISFLFSLGWNWMYLYKLAF). Over 238–329 (AQHQAEVAKM…GEFIKALMKE (92 aa)) the chain is Lumenal. The helical transmembrane segment at 330-350 (IPALLHLPVLIIMALAILSFC) threads the bilayer. Residues 351 to 551 (YGAGKSVHVL…GQDPVSSPCG (201 aa)) are Cytoplasmic-facing. The segment at 363–415 (IGGPESEPPQALRPRDRRRQEEIDYRPDGGAGDADFHYRGQMGPTEQGPYAKT) is disordered. Positions 380 to 389 (RRQEEIDYRP) are enriched in basic and acidic residues. 2 positions are modified to phosphoserine: serine 438 and serine 464. The interval 447 to 551 (VPDAEAREHP…GQDPVSSPCG (105 aa)) is disordered. The residue at position 482 (threonine 482) is a Phosphothreonine. A compositionally biased stretch (polar residues) spans 488–508 (TESSQSAKPVSGQDTSGNTEG). Phosphoserine occurs at positions 509, 524, and 532.

It belongs to the chloride channel MCLC family. Homomultimers. Interacts with mitochondrial protein PIGBOS1 (via C-terminus); the interaction occurs at the mitochondria-associated endoplasmic reticulum (ER) membrane, a zone of contact between the ER and mitochondrial membranes, but does not appear to play a role in ER-mitochondria tethering and is not affected by ER stress. Interacts with CALR. Expressed in the retina of the eye, with extensive expression in the lamina cribrosa, optic nerve, ganglion cell layer, inner nuclear layer, outer nuclear layer and retinal pigment epithelium.

Its subcellular location is the endoplasmic reticulum membrane. The catalysed reaction is chloride(in) = chloride(out). It carries out the reaction bromide(in) = bromide(out). The enzyme catalyses nitrate(in) = nitrate(out). It catalyses the reaction fluoride(in) = fluoride(out). Its activity is regulated as follows. Inhibited by ER lumenal Ca(2+). In terms of biological role, anion-selective channel with Ca(2+)-dependent and voltage-independent gating. Permeable to small monovalent anions with selectivity for bromide &gt; chloride &gt; nitrate &gt; fluoride. Operates in the endoplasmic reticulum (ER) membrane where it mediates chloride efflux to compensate for the loss of positive charges from the ER lumen upon Ca(2+) release. Contributes to the maintenance of ER Ca(2+) pools and activation of unfolded protein response to prevent accumulation of misfolded proteins in the ER lumen. Particularly involved in ER homeostasis mechanisms underlying motor neurons and retinal photoreceptors survival. In Homo sapiens (Human), this protein is Chloride channel CLIC-like protein 1.